The primary structure comprises 212 residues: Cytidylate kinase (212 aa).

An ATP-binding site is contributed by 7–15 (GPAASGKGT).

The protein belongs to the cytidylate kinase family. Type 1 subfamily.

It is found in the cytoplasm. It catalyses the reaction CMP + ATP = CDP + ADP. The enzyme catalyses dCMP + ATP = dCDP + ADP. The polypeptide is Cytidylate kinase (Bradyrhizobium sp. (strain ORS 278)).